Here is a 357-residue protein sequence, read N- to C-terminus: MEEGMNILHDFGIQSTRYLQVNYQDSQDWFILVSVIADLRNAFYVLFPIWFHLKETVGINLLWVAVVGDWFNLVFKWILFGQRPYWWVLDTDYYSNSSVPIIKQFPVTCETGPGSPSGHAMGAAGVYYVMVTSTLAIFRGKKKPTYGFRCLNVILWLGFWAVQLNVCLSRIYLAAHFPHQVVAGVLSGIAVAETFSHIRGIYNASLRKYCLITIFLFGFALGFYLLLKGLGVDLLWTLEKAKRWCERPEWVHLDTTPFASLFKNLGTLLGLGLALNSSMYRKSCKGELSKLLPFRFACIVASLVLLHLFDSLKPPSQVELIFYILSFCKSATVPFASVSLIPYCLARILGQTHKKSL.

Residues 1-28 (MEEGMNILHDFGIQSTRYLQVNYQDSQD) lie on the Lumenal side of the membrane. The helical transmembrane segment at 29–49 (WFILVSVIADLRNAFYVLFPI) threads the bilayer. The Cytoplasmic portion of the chain corresponds to 50–60 (WFHLKETVGIN). Residues 61–81 (LLWVAVVGDWFNLVFKWILFG) traverse the membrane as a helical segment. Over 82–117 (QRPYWWVLDTDYYSNSSVPIIKQFPVTCETGPGSPS) the chain is Lumenal. Arg-83 serves as a coordination point for substrate. Asn-96 is a glycosylation site (N-linked (GlcNAc...) asparagine). A helical membrane pass occupies residues 118–138 (GHAMGAAGVYYVMVTSTLAIF). His-119 serves as the catalytic Proton donor. The Cytoplasmic segment spans residues 139 to 147 (RGKKKPTYG). The chain crosses the membrane as a helical span at residues 148–168 (FRCLNVILWLGFWAVQLNVCL). Topologically, residues 169 to 179 (SRIYLAAHFPH) are lumenal. Arg-170 serves as a coordination point for substrate. The Nucleophile role is filled by His-176. Residues 180 to 202 (QVVAGVLSGIAVAETFSHIRGIY) form a helical membrane-spanning segment. The Cytoplasmic segment spans residues 203–211 (NASLRKYCL). A helical membrane pass occupies residues 212-232 (ITIFLFGFALGFYLLLKGLGV). Residues 233–254 (DLLWTLEKAKRWCERPEWVHLD) are Lumenal-facing. The chain crosses the membrane as a helical span at residues 255-275 (TTPFASLFKNLGTLLGLGLAL). At 276–291 (NSSMYRKSCKGELSKL) the chain is on the cytoplasmic side. A helical transmembrane segment spans residues 292–312 (LPFRFACIVASLVLLHLFDSL). The Lumenal segment spans residues 313-320 (KPPSQVEL). A helical transmembrane segment spans residues 321 to 341 (IFYILSFCKSATVPFASVSLI). The Cytoplasmic portion of the chain corresponds to 342-357 (PYCLARILGQTHKKSL). Positions 354-357 (KKSL) match the Prevents secretion from ER motif.

This sequence belongs to the glucose-6-phosphatase family. As to expression, liver and kidney.

It is found in the endoplasmic reticulum membrane. The catalysed reaction is D-glucose 6-phosphate + H2O = D-glucose + phosphate. The protein operates within carbohydrate biosynthesis; gluconeogenesis. Its function is as follows. Hydrolyzes glucose-6-phosphate to glucose in the endoplasmic reticulum. Forms with the glucose-6-phosphate transporter (SLC37A4/G6PT) the complex responsible for glucose production in the terminal step of glycogenolysis and gluconeogenesis. Hence, it is the key enzyme in homeostatic regulation of blood glucose levels. The sequence is that of Glucose-6-phosphatase catalytic subunit 1 (G6pc1) from Mus musculus (Mouse).